The chain runs to 294 residues: 4-diphosphocytidyl-2-C-methyl-D-erythritol kinase (294 aa).

Lys-19 is a catalytic residue. ATP is bound at residue 106–116; that stretch reads PVASGIGGGSA. The active site involves Asp-148.

This sequence belongs to the GHMP kinase family. IspE subfamily.

It carries out the reaction 4-CDP-2-C-methyl-D-erythritol + ATP = 4-CDP-2-C-methyl-D-erythritol 2-phosphate + ADP + H(+). It participates in isoprenoid biosynthesis; isopentenyl diphosphate biosynthesis via DXP pathway; isopentenyl diphosphate from 1-deoxy-D-xylulose 5-phosphate: step 3/6. Catalyzes the phosphorylation of the position 2 hydroxy group of 4-diphosphocytidyl-2C-methyl-D-erythritol. The polypeptide is 4-diphosphocytidyl-2-C-methyl-D-erythritol kinase (Rhizobium etli (strain ATCC 51251 / DSM 11541 / JCM 21823 / NBRC 15573 / CFN 42)).